A 196-amino-acid chain; its full sequence is MEKKTGTTTVGIKVKDGVVLAADTQASLDHMVETLNIKKIIPITDRIAITTAGSVGDVQMLARYLEAEARYYYFTWGRPMTTKAMANLLSNILNENRWFPYLVQIIIGGYVDEPTIANLDPFGGLIFDDYTATGSGTPFAIAVLEEGYREDLTIEEAKELAIRAVRAAGRRDVYTGSKKVQVVTITKDGMKEEFVV.

Positions 1 to 6 are cleaved as a propeptide — removed in mature form; by autocatalysis; sequence MEKKTG. Thr7 acts as the Nucleophile in catalysis.

It belongs to the peptidase T1B family. The 20S proteasome core is composed of 14 alpha and 14 beta subunits that assemble into four stacked heptameric rings, resulting in a barrel-shaped structure. The two inner rings, each composed of seven catalytic beta subunits, are sandwiched by two outer rings, each composed of seven alpha subunits. The catalytic chamber with the active sites is on the inside of the barrel. Has a gated structure, the ends of the cylinder being occluded by the N-termini of the alpha-subunits. Is capped at one or both ends by the proteasome regulatory ATPase, PAN.

The protein localises to the cytoplasm. The enzyme catalyses Cleavage of peptide bonds with very broad specificity.. With respect to regulation, the formation of the proteasomal ATPase PAN-20S proteasome complex, via the docking of the C-termini of PAN into the intersubunit pockets in the alpha-rings, triggers opening of the gate for substrate entry. Interconversion between the open-gate and close-gate conformations leads to a dynamic regulation of the 20S proteasome proteolysis activity. Component of the proteasome core, a large protease complex with broad specificity involved in protein degradation. This is Proteasome subunit beta 1 from Pyrococcus furiosus (strain ATCC 43587 / DSM 3638 / JCM 8422 / Vc1).